Reading from the N-terminus, the 686-residue chain is Delta-like protein 4 (686 aa).

The first 26 residues, 1–26 (MTPASRSACRWALLLLAVLWPQQRAA), serve as a signal peptide directing secretion. Topologically, residues 27 to 532 (GSGIFQLRLQ…GLPPSFPWVA (506 aa)) are extracellular. 2 disulfides stabilise this stretch: C51/C55 and C62/C75. Residues N79, N109, and N162 are each glycosylated (N-linked (GlcNAc...) asparagine). The DSL domain occupies 174–218 (VICSDNYYGESCSRLCKKRDDHFGHYECQPDGSLSCLPGWTGKYC). A disulfide bond links C176 and C185. Interaction with Notch1 regions lie at residues 186-188 (SRL) and 192-196 (RDDHF). Cystine bridges form between C189-C201, C209-C218, C223-C234, C227-C240, C242-C251, C254-C265, C260-C271, C273-C282, C289-C301, C295-C311, C313-C322, C329-C340, C334-C349, C351-C360, C367-C378, C372-C389, C391-C400, C407-C418, C412-C427, C429-C438, C445-C456, C450-C465, C467-C476, C485-C496, C490-C507, and C509-C518. EGF-like domains lie at 219–252 (DQPI…RLCN), 253–283 (ECIP…LFCD), 285–323 (DLNY…EHCE), 325–361 (GLSK…QHCE), 364–401 (TLTC…SNCE), 403–439 (KVDR…THCE), 441–477 (HISD…RRCE), and 481–519 (THDA…SRCE). N297 is a glycosylation site (N-linked (GlcNAc...) asparagine). A glycan (N-linked (GlcNAc...) asparagine) is linked at N394. A helical membrane pass occupies residues 533-553 (VSLGVGLVVLLVLLVMVVVAV). Over 554-686 (RQLRLRRPDD…RNECVIATEV (133 aa)) the chain is Cytoplasmic.

Interacts with NOTCH4. Interacts (via N-terminal DSL and MNNL domains) with NOTCH1 (via EGF-like domains). Expressed in vascular endothelium. Expressed in retina at least during embryogenesis.

The protein localises to the cell membrane. In terms of biological role, involved in the Notch signaling pathway as Notch ligand. Activates NOTCH1 and NOTCH4. Involved in angiogenesis; negatively regulates endothelial cell proliferation and migration and angiogenic sprouting. Essential for retinal progenitor proliferation. Required for suppressing rod fates in late retinal progenitors as well as for proper generation of other retinal cell types. During spinal cord neurogenesis, inhibits V2a interneuron fate. This is Delta-like protein 4 (Dll4) from Mus musculus (Mouse).